The chain runs to 226 residues: UPF0502 protein azo0627 (226 aa).

Belongs to the UPF0502 family.

In Azoarcus sp. (strain BH72), this protein is UPF0502 protein azo0627.